Here is a 93-residue protein sequence, read N- to C-terminus: MPRSLKKGPFVDQHLYLKVLAENEKGSKNVIKTWSRRSMIIPDMLGHTIAVHDGRKHVPVFVTESMVGHKLGEFAPTRTFRGHVKDDKKGKRR.

Belongs to the universal ribosomal protein uS19 family.

Its function is as follows. Protein S19 forms a complex with S13 that binds strongly to the 16S ribosomal RNA. This is Small ribosomal subunit protein uS19 from Micrococcus luteus (strain ATCC 4698 / DSM 20030 / JCM 1464 / CCM 169 / CCUG 5858 / IAM 1056 / NBRC 3333 / NCIMB 9278 / NCTC 2665 / VKM Ac-2230) (Micrococcus lysodeikticus).